Reading from the N-terminus, the 425-residue chain is Nicotinate dehydrogenase large molybdopterin subunit (425 aa).

Residues Q208 and 238-240 each bind Se-Mo-molybdopterin cytosine dinucleotide; that span reads GFG.

This sequence belongs to the xanthine dehydrogenase family. Heterooctamer of NDHM, NDHL, NDHS and NDHF. Dimer of heterotetramers. The cofactor is Se-Mo-molybdopterin cytosine dinucleotide.

The enzyme catalyses nicotinate + NADP(+) + H2O = 6-hydroxynicotinate + NADPH + H(+). Its pathway is cofactor degradation; nicotinate degradation; 6-hydroxynicotinate from nicotinate: step 1/1. Reversibly inactivated by selenide and sulfide. Not inhibited by cyanide. Functionally, catalyzes the hydroxylation of nicotinate to 6-hydroxynicotinate. Also active against 2-pyrazinecarboxylic acid, but inactive against other nicotinate analogs. In Eubacterium barkeri (Clostridium barkeri), this protein is Nicotinate dehydrogenase large molybdopterin subunit (ndhL).